We begin with the raw amino-acid sequence, 217 residues long: Lipid transferase CIDEA (217 aa).

Residues proline 33–proline 110 enclose the CIDE-N domain. The segment at cysteine 163 to alanine 180 is amphipathic helix.

The protein belongs to the CIDE family. Homodimer. Interacts with CIDEC. Directly interacts with CEBPB. Interacts with isoform CLSTN3beta of CLSTN3; inhibiting the lipid transferase activity of CIDEA. In terms of tissue distribution, highly expressed in brown adipose tissue and, at lower levels, in white adipose tissue (at protein level). Undetectable in undifferentiated preadipocytes. Expressed in mammary gland during pregnancy and lactation, in epithelial cells, but not in the surrounding adipose tissue. Secreted into milk via milk fat globules.

It is found in the lipid droplet. It localises to the nucleus. It catalyses the reaction a triacyl-sn-glycerol(in) = a triacyl-sn-glycerol(out). Functionally, lipid transferase that promotes unilocular lipid droplet formation by mediating lipid droplet fusion. Lipid droplet fusion promotes their enlargement, restricting lipolysis and favoring lipid storage. Localizes on the lipid droplet surface, at focal contact sites between lipid droplets, and mediates atypical lipid droplet fusion by promoting directional net neutral lipid transfer from the smaller to larger lipid droplets. The transfer direction may be driven by the internal pressure difference between the contacting lipid droplet pair and occurs at a lower rate than that promoted by CIDEC. May also act as a CEBPB coactivator in epithelial cells to control the expression of a subset of CEBPB downstream target genes, including ID2, IGF1, PRLR, SOCS1, SOCS3, XDH, but not casein. By interacting with CEBPB, strengthens the association of CEBPB with the XDH promoter, increases histone acetylation and dissociates HDAC1 from the promoter. When overexpressed, induces apoptosis; the physiological significance of its role in apoptosis is unclear. The sequence is that of Lipid transferase CIDEA from Mus musculus (Mouse).